The following is a 90-amino-acid chain: DNA-binding protein HU (90 aa).

A Phosphothreonine modification is found at Thr-4. The disordered stretch occupies residues Ala-56–Lys-90.

The protein belongs to the bacterial histone-like protein family. In terms of assembly, homodimer.

Its function is as follows. Histone-like DNA-binding protein which is capable of wrapping DNA to stabilize it, and thus to prevent its denaturation under extreme environmental conditions. The chain is DNA-binding protein HU (hup) from Geobacillus stearothermophilus (Bacillus stearothermophilus).